The sequence spans 255 residues: H-2 class II histocompatibility antigen, E-U alpha chain (255 aa).

The first 25 residues, 1-25, serve as a signal peptide directing secretion; the sequence is MATIGALLLRFFFIAVLMSSQKSWA. An alpha-1 region spans residues 26–109; it reads IKEEHTIIQA…KRSNNTPDAN (84 aa). Residues 26–217 are Extracellular-facing; sequence IKEEHTIIQA…KTLLPETKEN (192 aa). An alpha-2 region spans residues 110–203; sequence VAPEVTVLSR…GLEEPLRKHW (94 aa). The Ig-like C1-type domain maps to 112-204; it reads PEVTVLSRSP…LEEPLRKHWE (93 aa). An intrachain disulfide couples cysteine 132 to cysteine 188. The N-linked (GlcNAc...) asparagine glycan is linked to asparagine 143. The segment at 204-216 is connecting peptide; it reads EFEEKTLLPETKE. The chain crosses the membrane as a helical span at residues 218–238; it reads VVCALGLFVGLVGIVVGIILI. Over 239–255 the chain is Cytoplasmic; the sequence is MKGIKKRNVVERRQGAL.

It belongs to the MHC class II family.

Its subcellular location is the membrane. The protein is H-2 class II histocompatibility antigen, E-U alpha chain (H2-Ea) of Mus musculus (Mouse).